We begin with the raw amino-acid sequence, 213 residues long: Phosphoribosyl-dephospho-CoA transferase (213 aa).

Catalysis depends on residues aspartate 135 and aspartate 137.

Belongs to the MdcG family.

It carries out the reaction apo-[malonate decarboxylase ACP] + 2'-(5''-triphospho-alpha-D-ribosyl)-3'-dephospho-CoA = holo-[malonate decarboxylase ACP] + diphosphate. Its function is as follows. Transfers 2'-(5-triphosphoribosyl)-3'-dephosphocoenzyme-A to the apo-[acyl-carrier-protein] of the malonate decarboxylase to yield holo-[acyl-carrier-protein]. The protein is Phosphoribosyl-dephospho-CoA transferase of Xanthomonas campestris pv. campestris (strain ATCC 33913 / DSM 3586 / NCPPB 528 / LMG 568 / P 25).